An 859-amino-acid chain; its full sequence is DNA mismatch repair protein MutS (859 aa).

Residue 618 to 625 (GPNMGGKS) coordinates ATP. Positions 803–829 (RDHDVQQNTEQQGTQQNMSFVPSAPSP) are disordered. Low complexity predominate over residues 808-819 (QQNTEQQGTQQN).

This sequence belongs to the DNA mismatch repair MutS family.

This protein is involved in the repair of mismatches in DNA. It is possible that it carries out the mismatch recognition step. This protein has a weak ATPase activity. This is DNA mismatch repair protein MutS from Shewanella pealeana (strain ATCC 700345 / ANG-SQ1).